The chain runs to 205 residues: Small ribosomal subunit protein uS4 (205 aa).

An S4 RNA-binding domain is found at 94–157 (SRLDTVVYRM…KQIALIQESI (64 aa)).

This sequence belongs to the universal ribosomal protein uS4 family. In terms of assembly, part of the 30S ribosomal subunit. Contacts protein S5. The interaction surface between S4 and S5 is involved in control of translational fidelity.

Its function is as follows. One of the primary rRNA binding proteins, it binds directly to 16S rRNA where it nucleates assembly of the body of the 30S subunit. With S5 and S12 plays an important role in translational accuracy. The polypeptide is Small ribosomal subunit protein uS4 (Rickettsia canadensis (strain McKiel)).